The sequence spans 441 residues: Cysteine desulfurase, mitosomal (441 aa).

Pyridoxal 5'-phosphate is bound by residues 107–108, Asn-189, Gln-217, and 237–239; these read AT and SGH. Lys-240 is subject to N6-(pyridoxal phosphate)lysine. Residue Thr-277 coordinates pyridoxal 5'-phosphate. The Cysteine persulfide intermediate role is filled by Cys-367. Residue Cys-367 participates in [2Fe-2S] cluster binding.

This sequence belongs to the class-V pyridoxal-phosphate-dependent aminotransferase family. NifS/IscS subfamily. In terms of assembly, interacts with ISD11. It depends on pyridoxal 5'-phosphate as a cofactor.

The protein localises to the mitosome. The enzyme catalyses (sulfur carrier)-H + L-cysteine = (sulfur carrier)-SH + L-alanine. In terms of biological role, catalyzes the removal of elemental sulfur from cysteine to produce alanine. It supplies the inorganic sulfur for iron-sulfur (Fe-S) clusters in mitosomes. The polypeptide is Cysteine desulfurase, mitosomal (Trachipleistophora hominis (Microsporidian parasite)).